The primary structure comprises 853 residues: Trimethylguanosine synthase (853 aa).

The tract at residues 54–84 (NNAGDQGTEEEEDGHSNGTAESHSPNESDLD) is disordered. Threonine 61 carries the phosphothreonine modification. A compositionally biased stretch (polar residues) spans 69–80 (SNGTAESHSPNE). Serine 81, serine 85, serine 92, and serine 139 each carry phosphoserine. At tyrosine 144 the chain carries Phosphotyrosine. At serine 152 the chain carries Phosphoserine. Disordered regions lie at residues 328–437 (VEQS…DDNG) and 523–549 (ETSQDSLSQNKMQDTCTSSDSEEQDMS). A compositionally biased stretch (basic and acidic residues) spans 365-383 (KENDISENRSSDQPAKELQ). A phosphoserine mark is found at serine 405 and serine 431. Residues 424-435 (DVDENPDSEVDD) are compositionally biased toward acidic residues. Residues 526-541 (QDSLSQNKMQDTCTSS) show a composition bias toward polar residues. A Phosphoserine modification is found at serine 572. The tract at residues 594–623 (CSTEEIPNSPHAETEVEIKKKKKKNKNKKI) is disordered. A compositionally biased stretch (basic residues) spans 612–621 (KKKKKKNKNK). Aspartate 711 provides a ligand contact to S-adenosyl-L-methionine.

Belongs to the methyltransferase superfamily. Trimethylguanosine synthase family. In terms of assembly, may form homooligomers. Interacts with CREBBP/CBP, EED/WAIT1, EP300/P300, NCOA6/PRIP, PPARBP/PBP and SMN. Ubiquitously expressed.

Its subcellular location is the cytoplasm. It localises to the nucleus. It is found in the cajal body. The protein resides in the nucleolus. The catalysed reaction is a 5'-end (N(7)-methyl 5'-triphosphoguanosine)-ribonucleoside in snRNA + S-adenosyl-L-methionine = a 5'-end (N(2),N(7)-dimethyl 5'-triphosphoguanosine)-ribonucleoside in snRNA + S-adenosyl-L-homocysteine + H(+). The enzyme catalyses a 5'-end (N(7)-methyl 5'-triphosphoguanosine)-ribonucleoside in snoRNA + S-adenosyl-L-methionine = a 5'-end (N(2),N(7)-dimethyl 5'-triphosphoguanosine)-ribonucleoside in snoRNA + S-adenosyl-L-homocysteine + H(+). It catalyses the reaction a 5'-end (N(2),N(7)-dimethyl 5'-triphosphoguanosine)-ribonucleoside in snRNA + S-adenosyl-L-methionine = a 5'-end (N(2),N(2),N(7)-trimethyl 5'-triphosphoguanosine)-ribonucleoside in snRNA + S-adenosyl-L-homocysteine + H(+). It carries out the reaction a 5'-end (N(2),N(7)-dimethyl 5'-triphosphoguanosine)-ribonucleoside in snoRNA + S-adenosyl-L-methionine = a 5'-end (N(2),N(2),N(7)-trimethyl 5'-triphosphoguanosine)-ribonucleoside in snoRNA + S-adenosyl-L-homocysteine + H(+). In terms of biological role, catalyzes the 2 serial methylation steps for the conversion of the 7-monomethylguanosine (m(7)G) caps of snRNAs and snoRNAs to a 2,2,7-trimethylguanosine (m(2,2,7)G) cap structure. The enzyme is specific for guanine, and N7 methylation must precede N2 methylation. Hypermethylation of the m7G cap of U snRNAs leads to their concentration in nuclear foci, their colocalization with coilin and the formation of canonical Cajal bodies (CBs). Plays a role in transcriptional regulation. The protein is Trimethylguanosine synthase (Tgs1) of Mus musculus (Mouse).